Here is a 293-residue protein sequence, read N- to C-terminus: Triosephosphate isomerase (293 aa).

25 to 27 (NWK) serves as a coordination point for substrate. H117 acts as the Electrophile in catalysis. The active-site Proton acceptor is the E218.

This sequence belongs to the triosephosphate isomerase family. In terms of assembly, homodimer.

It localises to the cytoplasm. It catalyses the reaction D-glyceraldehyde 3-phosphate = dihydroxyacetone phosphate. It functions in the pathway carbohydrate biosynthesis; gluconeogenesis. It participates in carbohydrate degradation; glycolysis; D-glyceraldehyde 3-phosphate from glycerone phosphate: step 1/1. Its function is as follows. Involved in the gluconeogenesis. Catalyzes stereospecifically the conversion of dihydroxyacetone phosphate (DHAP) to D-glyceraldehyde-3-phosphate (G3P). The chain is Triosephosphate isomerase from Tropheryma whipplei (strain Twist) (Whipple's bacillus).